A 211-amino-acid polypeptide reads, in one-letter code: Redox-sensing transcriptional repressor Rex (211 aa).

The H-T-H motif DNA-binding region spans 13–52 (TYLRILEELEAQGVHRTSSEQLGELAQVTAFQVRKDLSYF). Residue 87–92 (GMGRLG) participates in NAD(+) binding.

It belongs to the transcriptional regulatory Rex family. In terms of assembly, homodimer.

It localises to the cytoplasm. Its function is as follows. Modulates transcription in response to changes in cellular NADH/NAD(+) redox state. The chain is Redox-sensing transcriptional repressor Rex from Thermus aquaticus.